The primary structure comprises 476 residues: 2-(3-amino-3-carboxypropyl)histidine synthase subunit 2 (476 aa).

The segment covering 1–15 (MTESAPSAFFTTSTP) has biased composition (polar residues). The tract at residues 1 to 24 (MTESAPSAFFTTSTPADHVHEEES) is disordered. Residues Cys102, Cys123, and Cys347 each coordinate [4Fe-4S] cluster. The disordered stretch occupies residues 451 to 476 (DGVSTAEDSTKMGEGRSGIAQGYSGK).

Belongs to the DPH1/DPH2 family. DPH2 subfamily. As to quaternary structure, component of the 2-(3-amino-3-carboxypropyl)histidine synthase complex composed of dph-1, dph-2, dph-3 and a NADH-dependent reductase. Requires [4Fe-4S] cluster as cofactor.

It participates in protein modification; peptidyl-diphthamide biosynthesis. Functionally, required for the first step of diphthamide biosynthesis, a post-translational modification of histidine which occurs in elongation factor 2. Dph-1 and dph-2 transfer a 3-amino-3-carboxypropyl (ACP) group from S-adenosyl-L-methionine (SAM) to a histidine residue, the reaction is assisted by a reduction system comprising dph-3 and a NADH-dependent reductase. Facilitates the reduction of the catalytic iron-sulfur cluster found in the dph-1 subunit. In Caenorhabditis elegans, this protein is 2-(3-amino-3-carboxypropyl)histidine synthase subunit 2 (dph-2).